The chain runs to 1053 residues: Sal-like protein 4 (1053 aa).

Residues 1-62 (MSRRKQAKPQ…DEVASEDEAT (62 aa)) form a disordered region. Residues 20 to 46 (EQQPQQQTPEFADAAPAAPAAGELGAP) are compositionally biased toward low complexity. The residue at position 57 (serine 57) is a Phosphoserine. The segment at 72–94 (HVCEKCCAEFFSISEFLEHKKNC) adopts a C2H2-type 1; atypical zinc-finger fold. The disordered stretch occupies residues 116–149 (SGAVLSHQPTSPGSKDCHRENGGSSEDMKEKPDA). The span at 130 to 149 (KDCHRENGGSSEDMKEKPDA) shows a compositional bias: basic and acidic residues. Lysine 156 is covalently cross-linked (Glycyl lysine isopeptide (Lys-Gly) (interchain with G-Cter in SUMO1); alternate). Lysine 156 participates in a covalent cross-link: Glycyl lysine isopeptide (Lys-Gly) (interchain with G-Cter in SUMO2); alternate. Residues lysine 175, lysine 190, and lysine 290 each participate in a glycyl lysine isopeptide (Lys-Gly) (interchain with G-Cter in SUMO2) cross-link. A Phosphoserine modification is found at serine 307. A Glycyl lysine isopeptide (Lys-Gly) (interchain with G-Cter in SUMO1); alternate cross-link involves residue lysine 316. A Glycyl lysine isopeptide (Lys-Gly) (interchain with G-Cter in SUMO2); alternate cross-link involves residue lysine 316. Residue lysine 372 forms a Glycyl lysine isopeptide (Lys-Gly) (interchain with G-Cter in SUMO2) linkage. Lysine 374 is covalently cross-linked (Glycyl lysine isopeptide (Lys-Gly) (interchain with G-Cter in SUMO1); alternate). A Glycyl lysine isopeptide (Lys-Gly) (interchain with G-Cter in SUMO2); alternate cross-link involves residue lysine 374. C2H2-type zinc fingers lie at residues 382 to 404 (HKCKYCSKVFGTDSSLQIHLRSH) and 410 to 432 (FVCSVCGHRFTTKGNLKVHFHRH). Lysine 436 is covalently cross-linked (Glycyl lysine isopeptide (Lys-Gly) (interchain with G-Cter in SUMO2)). The span at 483 to 496 (VGLPQNLSSGTNPK) shows a compositional bias: polar residues. The segment at 483–546 (VGLPQNLSSG…QGSGTPEPGS (64 aa)) is disordered. Threonine 541 bears the Phosphothreonine mark. A Glycyl lysine isopeptide (Lys-Gly) (interchain with G-Cter in SUMO2) cross-link involves residue lysine 550. 2 C2H2-type zinc fingers span residues 566–588 (NECLICHRVLSCQSSLKMHYRTH) and 594–616 (FQCKICGRAFSTKGNLKTHLGVH). Residues lysine 597 and lysine 623 each participate in a glycyl lysine isopeptide (Lys-Gly) (interchain with G-Cter in SUMO2) cross-link. The C2H2-type 6 zinc finger occupies 626-648 (HSCPICQKKFTNAVMLQQHIRMH). 3 disordered regions span residues 694–714 (EEVSSQEAPSSSSKVPTPLPS), 736–776 (VGPA…QSRS), and 788–828 (LSPA…LPST). Over residues 698-708 (SQEAPSSSSKV) the composition is skewed to low complexity. Composition is skewed to polar residues over residues 743–776 (LQRQGSRENGSVESDGLTNDSSSLMGDQEYQSRS) and 788–797 (LSPANSQAES). A phosphoserine mark is found at serine 776 and serine 789. Positions 810-821 (ESSENSRTEMEG) are enriched in basic and acidic residues. Residue lysine 838 forms a Glycyl lysine isopeptide (Lys-Gly) (interchain with G-Cter in SUMO1); alternate linkage. A Glycyl lysine isopeptide (Lys-Gly) (interchain with G-Cter in SUMO2); alternate cross-link involves residue lysine 838. Residue serine 852 is modified to Phosphoserine. The C2H2-type 7 zinc finger occupies 870–892 (HGCTRCGKNFSSASALQIHERTH). A Glycyl lysine isopeptide (Lys-Gly) (interchain with G-Cter in SUMO2) cross-link involves residue lysine 896. A C2H2-type 8 zinc finger spans residues 898 to 920 (FVCNICGRAFTTKGNLKVHYMTH). Glycyl lysine isopeptide (Lys-Gly) (interchain with G-Cter in SUMO2) cross-links involve residues lysine 932 and lysine 947. The interval 1018 to 1039 (GSQSGISADVEKPSATDGVPKH) is disordered. At serine 1019 the chain carries Phosphoserine.

The protein belongs to the sal C2H2-type zinc-finger protein family. As to quaternary structure, interacts with POU5F1/OCT4. Interacts with NANOG. Interacts with BEND3. Interacts with NSD2 (via PHD-type zinc fingers 1, 2 and 3). Interacts with NRBP1. Post-translationally, isoform SALL4B exists primarily as a ubiquitinated form. In terms of processing, sumoylation with both SUMO1 and SUMO2 regulates the stability, subcellular localization, transcriptional activity, and may reduce interaction with POU5F1/OCT4. In terms of tissue distribution, expressed in testis. Constitutively expressed in acute myeloid leukemia (AML).

Its subcellular location is the cytoplasm. It localises to the nucleus. Its function is as follows. Transcription factor with a key role in the maintenance and self-renewal of embryonic and hematopoietic stem cells. This chain is Sal-like protein 4 (SALL4), found in Homo sapiens (Human).